The sequence spans 337 residues: MATIKDVAKLAAVSTTTVSHVINKTRFVAEATQKRVWEAVEELNYAPSAVARSLKCNTTRTIGMLVTQSFNPFFAEVMHGVENYCYKQGYTLFMCNTEGDLEKQKHYLRMLAEKRVDGLLVMCSDLNEQLLTLLEKNTELPMVIMDWGPDSPRTDKIIDNSEEGGYLATKHLIENGHTHIACITGQADKVTCKERVRGFERAHADANLSFNPEWILEGDFECASASKAVDKILSIEESKRPTALFCFNDIMALAAISKIQQSGLRVPEDISVIGYDNIELSAYFSPPLTTIHQPKRRVGKTAVEILLERIKDKDHERRVFEMQPEVVTRSSVLNRLK.

An HTH lacI-type domain is found at 2 to 56 (ATIKDVAKLAAVSTTTVSHVINKTRFVAEATQKRVWEAVEELNYAPSAVARSLKC). A DNA-binding region (H-T-H motif) is located at residues 4-23 (IKDVAKLAAVSTTTVSHVIN). The DNA-binding element occupies 48-56 (SAVARSLKC). Hypoxanthine-binding residues include Phe73, Lys189, Thr191, Phe220, and Asp276.

Homodimer.

Its pathway is purine metabolism; purine nucleotide biosynthesis [regulation]. Is the main repressor of the genes involved in the de novo synthesis of purine nucleotides, regulating purB, purC, purEK, purF, purHD, purL, purMN and guaBA expression. PurR is allosterically activated to bind its cognate DNA by binding the purine corepressors, hypoxanthine or guanine, thereby effecting transcription repression. The chain is HTH-type transcriptional repressor PurR from Aliivibrio fischeri (strain MJ11) (Vibrio fischeri).